Consider the following 88-residue polypeptide: UPF0335 protein NGR_c28390 (88 aa).

It belongs to the UPF0335 family.

The polypeptide is UPF0335 protein NGR_c28390 (Sinorhizobium fredii (strain NBRC 101917 / NGR234)).